Reading from the N-terminus, the 673-residue chain is DNA ligase (673 aa).

Residues 33 to 37 (DHQYD), 83 to 84 (SL), and Glu117 each bind NAD(+). Lys119 functions as the N6-AMP-lysine intermediate in the catalytic mechanism. Arg140, Glu175, Lys282, and Lys306 together coordinate NAD(+). 4 residues coordinate Zn(2+): Cys400, Cys403, Cys418, and Cys424. The BRCT domain occupies 592-673 (RGSSAISGKT…WVKMVEDARS (82 aa)).

It belongs to the NAD-dependent DNA ligase family. LigA subfamily. The cofactor is Mg(2+). Mn(2+) is required as a cofactor.

It catalyses the reaction NAD(+) + (deoxyribonucleotide)n-3'-hydroxyl + 5'-phospho-(deoxyribonucleotide)m = (deoxyribonucleotide)n+m + AMP + beta-nicotinamide D-nucleotide.. DNA ligase that catalyzes the formation of phosphodiester linkages between 5'-phosphoryl and 3'-hydroxyl groups in double-stranded DNA using NAD as a coenzyme and as the energy source for the reaction. It is essential for DNA replication and repair of damaged DNA. The sequence is that of DNA ligase from Anaplasma marginale (strain St. Maries).